A 334-amino-acid chain; its full sequence is UDP-N-acetylenolpyruvoylglucosamine reductase (334 aa).

An FAD-binding PCMH-type domain is found at 16 to 186 (INVFAKKIII…LSVGIKLPKT (171 aa)). Residue R162 is part of the active site. Catalysis depends on S232, which acts as the Proton donor. Residue E329 is part of the active site.

This sequence belongs to the MurB family. FAD is required as a cofactor.

It localises to the cytoplasm. It catalyses the reaction UDP-N-acetyl-alpha-D-muramate + NADP(+) = UDP-N-acetyl-3-O-(1-carboxyvinyl)-alpha-D-glucosamine + NADPH + H(+). The protein operates within cell wall biogenesis; peptidoglycan biosynthesis. Functionally, cell wall formation. The polypeptide is UDP-N-acetylenolpyruvoylglucosamine reductase (Buchnera aphidicola subsp. Baizongia pistaciae (strain Bp)).